Reading from the N-terminus, the 307-residue chain is Porphobilinogen deaminase (307 aa).

Cys-241 is subject to S-(dipyrrolylmethanemethyl)cysteine.

It belongs to the HMBS family. As to quaternary structure, monomer. Dipyrromethane serves as cofactor.

The catalysed reaction is 4 porphobilinogen + H2O = hydroxymethylbilane + 4 NH4(+). The protein operates within porphyrin-containing compound metabolism; protoporphyrin-IX biosynthesis; coproporphyrinogen-III from 5-aminolevulinate: step 2/4. Its function is as follows. Tetrapolymerization of the monopyrrole PBG into the hydroxymethylbilane pre-uroporphyrinogen in several discrete steps. The sequence is that of Porphobilinogen deaminase from Coxiella burnetii (strain CbuK_Q154) (Coxiella burnetii (strain Q154)).